The chain runs to 65 residues: uncharacterized protein (65 aa).

It localises to the plastid. The protein localises to the chloroplast. This is an uncharacterized protein from Guillardia theta (Cryptophyte).